The sequence spans 153 residues: Large ribosomal subunit protein uL22 (153 aa).

It belongs to the universal ribosomal protein uL22 family. In terms of assembly, part of the 50S ribosomal subunit.

Its function is as follows. This protein binds specifically to 23S rRNA. It makes multiple contacts with different domains of the 23S rRNA in the assembled 50S subunit and ribosome. In terms of biological role, the globular domain of the protein is located near the polypeptide exit tunnel on the outside of the subunit, while an extended beta-hairpin is found that lines the wall of the exit tunnel in the center of the 70S ribosome. This Methanococcus maripaludis (strain C5 / ATCC BAA-1333) protein is Large ribosomal subunit protein uL22.